The chain runs to 397 residues: Probable peptidoglycan glycosyltransferase FtsW (397 aa).

The Cytoplasmic segment spans residues 1–30; it reads MYGLEMLEKIKLEYDKWACLTPKNSLYDRT. The helical transmembrane segment at 31–51 threads the bilayer; sequence LVWLFLSLLMIGFIMVTSASI. The Periplasmic segment spans residues 52 to 61; that stretch reads PVSTRLNNDP. Residues 62 to 82 form a helical membrane-spanning segment; that stretch reads FHFAIRDSIYLACSLLAFAFV. The Cytoplasmic segment spans residues 83-94; the sequence is VKIPMRNWEKYN. Residues 95 to 115 form a helical membrane-spanning segment; that stretch reads VPLFLLSLLFLASVLIFGRSV. Residues 116–126 are Periplasmic-facing; it reads NGSIRWIQLGP. A helical transmembrane segment spans residues 127-146; that stretch reads INFQPAELSKLAIICYFSSF. The Cytoplasmic segment spans residues 147 to 158; sequence YVRKYDEMRNRS. Transmembrane regions (helical) follow at residues 159–179 and 180–200; these read ASVI…LLQP and DLGS…IMGA. Residue lysine 201 is a topological domain, cytoplasmic. A helical transmembrane segment spans residues 202-222; the sequence is VMQFLLLIVTASVSFILLVLT. The Periplasmic segment spans residues 223–280; sequence SEYRLKRVTSFLDPFADAYGDGFQLSNAQMAFGQGQLWGQGLGNSVQKLEYLPEAHTD. Residues 281-301 traverse the membrane as a helical segment; that stretch reads FVMAVVAEEFGFIGIIFMVVL. At 302–325 the chain is on the cytoplasmic side; it reads LLCLSFRAIKISRDALKLEARFRG. The helical transmembrane segment at 326–346 threads the bilayer; that stretch reads FFAFGVAIWVFLQGSVNLGVA. Topologically, residues 347-356 are periplasmic; that stretch reads SGALPTKGLT. Residues 357–377 traverse the membrane as a helical segment; that stretch reads FPLVSYGGSSLVIMSVAIAIL. The Cytoplasmic portion of the chain corresponds to 378 to 397; that stretch reads LRIDYENRLTRVGHAQIKEP.

Belongs to the SEDS family. FtsW subfamily.

The protein localises to the cell inner membrane. The catalysed reaction is [GlcNAc-(1-&gt;4)-Mur2Ac(oyl-L-Ala-gamma-D-Glu-L-Lys-D-Ala-D-Ala)](n)-di-trans,octa-cis-undecaprenyl diphosphate + beta-D-GlcNAc-(1-&gt;4)-Mur2Ac(oyl-L-Ala-gamma-D-Glu-L-Lys-D-Ala-D-Ala)-di-trans,octa-cis-undecaprenyl diphosphate = [GlcNAc-(1-&gt;4)-Mur2Ac(oyl-L-Ala-gamma-D-Glu-L-Lys-D-Ala-D-Ala)](n+1)-di-trans,octa-cis-undecaprenyl diphosphate + di-trans,octa-cis-undecaprenyl diphosphate + H(+). The protein operates within cell wall biogenesis; peptidoglycan biosynthesis. Functionally, peptidoglycan polymerase that is essential for cell division. The chain is Probable peptidoglycan glycosyltransferase FtsW from Haemophilus ducreyi (strain 35000HP / ATCC 700724).